The primary structure comprises 642 residues: Mediator of RNA polymerase II transcription subunit 17 (642 aa).

Residues 210 to 232 are disordered; it reads AEETGDEDTASSSNSSSSVSGNN. Positions 220 to 232 are enriched in low complexity; sequence SSSNSSSSVSGNN.

Belongs to the Mediator complex subunit 17 family. As to quaternary structure, component of the Mediator complex, which includes at least CDK8, MED4, MED6, MED11, MED14, MED17, MED18, MED20, MED21, MED22, MED27, MED28, MED30 and MED31. Interacts with Hsf.

It is found in the nucleus. Its subcellular location is the chromosome. Component of the Mediator complex, a coactivator involved in the regulated transcription of nearly all RNA polymerase II-dependent genes. Mediator functions as a bridge to convey information from gene-specific regulatory proteins to the basal RNA polymerase II transcription machinery. Mediator is recruited to promoters by direct interactions with regulatory proteins and serves as a scaffold for the assembly of a functional preinitiation complex with RNA polymerase II and the general transcription factors. Required for activated transcription of the MtnA, MtnB and MtnD genes. Negatively regulates sex comb development. In Drosophila melanogaster (Fruit fly), this protein is Mediator of RNA polymerase II transcription subunit 17 (MED17).